The primary structure comprises 204 residues: Small ribosomal subunit protein uS4 (204 aa).

In terms of domain architecture, S4 RNA-binding spans 95–157 (RRLDNTVFRM…KGIHSIIRHN (63 aa)).

This sequence belongs to the universal ribosomal protein uS4 family. In terms of assembly, part of the 30S ribosomal subunit. Contacts protein S5. The interaction surface between S4 and S5 is involved in control of translational fidelity.

Functionally, one of the primary rRNA binding proteins, it binds directly to 16S rRNA where it nucleates assembly of the body of the 30S subunit. In terms of biological role, with S5 and S12 plays an important role in translational accuracy. The sequence is that of Small ribosomal subunit protein uS4 from Treponema pallidum (strain Nichols).